The chain runs to 226 residues: MKYFLDSAILEEIRYAYENWAIDGVTTNPRHIMNSGKPFLTVLDEFASEFKGVENFPISVEINPHLDNAKDMVEEGTKIAKLSSNFVIKIPCTEPGLIAAKEFEKQGISTNVTLVFSPSQALQPARIGAKFVSPFVGWKENSGDDTTQYIQDIVNIYKNYNYNTEIIVAALRNGKQIVDAAKAGAHIVTCGFDVYKESFQHAFTDYGLNKFRNAWDNTVTEAPVLK.

The Schiff-base intermediate with substrate role is filled by Lys-89.

The protein belongs to the transaldolase family.

It catalyses the reaction 6-deoxy-6-sulfo-D-fructose + D-glyceraldehyde 3-phosphate = D-fructose 6-phosphate + (2S)-3-sulfolactaldehyde. The catalysed reaction is 6-deoxy-6-sulfo-D-fructose + D-erythrose 4-phosphate = (2S)-3-sulfolactaldehyde + D-sedoheptulose 7-phosphate. Functionally, part of the sulfo-TAL (or sulfo-SFT) pathway, a D-sulfoquinovose degradation pathway that produces sulfolactate (SL). Catalyzes the conversion of 6-deoxy-6-sulfo-D-fructose (SF) and glyceraldehyde 3-phosphate (GAP) into fructose-6-phosphate (F6P) and 3-sulfolactaldehyde (SLA). Can also catalyze the SF-cleavage with erythrose 4-phosphate (E4P) as acceptor, forming 3-sulfolactaldehyde (SLA) and sedoheptulose 7-phosphate (S7P). This is 6-deoxy-6-sulfo-D-fructose transaldolase from Priestia aryabhattai (Bacillus aryabhattai).